The primary structure comprises 701 residues: Glycine--tRNA ligase beta subunit (701 aa).

The protein belongs to the class-II aminoacyl-tRNA synthetase family. In terms of assembly, tetramer of two alpha and two beta subunits.

The protein resides in the cytoplasm. It carries out the reaction tRNA(Gly) + glycine + ATP = glycyl-tRNA(Gly) + AMP + diphosphate. The chain is Glycine--tRNA ligase beta subunit from Helicobacter pylori (strain HPAG1).